Consider the following 273-residue polypeptide: Urease accessory protein UreD (273 aa).

Belongs to the UreD family. As to quaternary structure, ureD, UreF and UreG form a complex that acts as a GTP-hydrolysis-dependent molecular chaperone, activating the urease apoprotein by helping to assemble the nickel containing metallocenter of UreC. The UreE protein probably delivers the nickel.

It is found in the cytoplasm. In terms of biological role, required for maturation of urease via the functional incorporation of the urease nickel metallocenter. This is Urease accessory protein UreD from Rhizobium leguminosarum bv. viciae.